We begin with the raw amino-acid sequence, 461 residues long: Spermidine coumaroyl-CoA acyltransferase (461 aa).

Active-site proton acceptor residues include His-168 and Asp-393.

Belongs to the plant acyltransferase family. In terms of assembly, monomer. In terms of tissue distribution, mainly expressed in roots at low levels, specifically, in the root tip.

The enzyme catalyses 2 (E)-4-coumaroyl-CoA + spermidine = N(1),N(8)-bis(coumaroyl)-spermidine + 2 CoA + 2 H(+). It functions in the pathway amine and polyamine metabolism; spermidine metabolism. In terms of biological role, spermidine coumaroyl-CoA acyltransferase that mediates the conversion of spermidine into dicoumaroyl-spermidine. This chain is Spermidine coumaroyl-CoA acyltransferase, found in Arabidopsis thaliana (Mouse-ear cress).